Here is a 1336-residue protein sequence, read N- to C-terminus: Cytokinesis protein sepH (1336 aa).

Residues M1–E10 are compositionally biased toward low complexity. A disordered region spans residues M1–V46. Over residues K36–V46 the composition is skewed to basic and acidic residues. The 251-residue stretch at Y59–I309 folds into the Protein kinase domain. Residues L65–V73 and K88 contribute to the ATP site. D181 functions as the Proton acceptor in the catalytic mechanism. Residues S368–D402 are disordered. Over residues H384–D393 the composition is skewed to basic and acidic residues. A coiled-coil region spans residues A654–E682. Residues E1194–K1205 are compositionally biased toward basic and acidic residues. The segment at E1194–S1336 is disordered. Residues T1213 to N1236 are compositionally biased toward polar residues. 2 stretches are compositionally biased toward low complexity: residues P1253–P1264 and P1272–S1285. Residues S1315–P1327 are compositionally biased toward basic residues.

Belongs to the protein kinase superfamily. Ser/Thr protein kinase family. CDC7 subfamily. The cofactor is Mg(2+).

The enzyme catalyses L-seryl-[protein] + ATP = O-phospho-L-seryl-[protein] + ADP + H(+). The catalysed reaction is L-threonyl-[protein] + ATP = O-phospho-L-threonyl-[protein] + ADP + H(+). Functionally, required for early events during cytokinesis including localization of cytoskeletal components to the cytokinetic ring. The protein is Cytokinesis protein sepH of Aspergillus niger (strain ATCC MYA-4892 / CBS 513.88 / FGSC A1513).